The chain runs to 340 residues: Guanine nucleotide-binding protein G(I)/G(S)/G(T) subunit beta-1 (340 aa).

Position 2 is an N-acetylserine (Ser2). Phosphoserine is present on Ser2. 7 WD repeats span residues 46 to 94, 95 to 140, 141 to 181, 182 to 223, 224 to 267, 268 to 309, and 310 to 340; these read RTRR…HAIP, LRSS…RELA, GHTG…TTFT, GHTG…QTFT, GHES…YSHD, NIIC…GVLA, and GHDN…KIWN. At His266 the chain carries Phosphohistidine.

The protein belongs to the WD repeat G protein beta family. G proteins are composed of 3 units, alpha, beta and gamma. The heterodimer formed by GNB1 and GNG2 interacts with ARHGEF5. The heterodimer formed by GNB1 and GNG2 interacts with GRK2. Forms a complex with GNAO1 and GNG3. Interacts with ARHGEF18 and RASD2. Forms complexes with TAS2R14 and G-proteins; these complexes play a role in the perception of bitterness. Component of the TAS2R14-GNAI1 complex, consisting of TAS2R14, GNAI1, GNB1 and GNG2. Component of the TAS2R14-GNAT3 complex, consisting of TAS2R14, GNAT3, GNB1 and GNG2. Component of the TAS2R14-GNAS2 complex, consisting of TAS2R14, GNAS2, GNB1 and GNG2. In terms of processing, phosphorylation at His-266 by NDKB contributes to G protein activation by increasing the high energetic phosphate transfer onto GDP.

In terms of biological role, guanine nucleotide-binding proteins (G proteins) are involved as a modulator or transducer in various transmembrane signaling systems. The beta and gamma chains are required for the GTPase activity, for replacement of GDP by GTP, and for G protein-effector interaction. This Cricetulus griseus (Chinese hamster) protein is Guanine nucleotide-binding protein G(I)/G(S)/G(T) subunit beta-1 (GNB1).